Reading from the N-terminus, the 640-residue chain is Probable threonine--tRNA ligase, cytoplasmic (640 aa).

The 63-residue stretch at 1–63 (MYEVKLKVEL…LKDCKLELMT (63 aa)) folds into the TGS domain.

This sequence belongs to the class-II aminoacyl-tRNA synthetase family.

It localises to the cytoplasm. It catalyses the reaction tRNA(Thr) + L-threonine + ATP = L-threonyl-tRNA(Thr) + AMP + diphosphate + H(+). The polypeptide is Probable threonine--tRNA ligase, cytoplasmic (Encephalitozoon cuniculi (strain GB-M1) (Microsporidian parasite)).